The sequence spans 362 residues: Talin rod domain-containing protein 1 (362 aa).

The tract at residues 1–27 (MASGSAGKPTGEAASPAPGSAVGGASS) is disordered. Ala2 carries the N-acetylalanine modification. A compositionally biased stretch (low complexity) spans 9 to 27 (PTGEAASPAPGSAVGGASS).

As to quaternary structure, may homodimerize. Interacts with F-actin. As to expression, ubiquitous.

Actin-binding protein which may have an oncogenic function and regulates cell proliferation, migration and invasion in cancer cells. The polypeptide is Talin rod domain-containing protein 1 (Mus musculus (Mouse)).